The sequence spans 462 residues: Tubulin alpha-4 chain (462 aa).

Residues Q11, E82, S151, G155, T156, T190, N217, and N239 each coordinate GTP. E82 contacts Mg(2+). E265 is a catalytic residue.

The protein belongs to the tubulin family. As to quaternary structure, dimer of alpha and beta chains. A typical microtubule is a hollow water-filled tube with an outer diameter of 25 nm and an inner diameter of 15 nM. Alpha-beta heterodimers associate head-to-tail to form protofilaments running lengthwise along the microtubule wall with the beta-tubulin subunit facing the microtubule plus end conferring a structural polarity. Microtubules usually have 13 protofilaments but different protofilament numbers can be found in some organisms and specialized cells. It depends on Mg(2+) as a cofactor.

It is found in the cytoplasm. Its subcellular location is the cytoskeleton. The enzyme catalyses GTP + H2O = GDP + phosphate + H(+). Its function is as follows. Tubulin is the major constituent of microtubules, a cylinder consisting of laterally associated linear protofilaments composed of alpha- and beta-tubulin heterodimers. Microtubules grow by the addition of GTP-tubulin dimers to the microtubule end, where a stabilizing cap forms. Below the cap, tubulin dimers are in GDP-bound state, owing to GTPase activity of alpha-tubulin. This chain is Tubulin alpha-4 chain (alphaTub67C), found in Drosophila melanogaster (Fruit fly).